The chain runs to 394 residues: Cystathionine gamma-lyase (394 aa).

The disordered stretch occupies residues Lys-37–Pro-56. Residues Arg-52, Tyr-104, and Arg-109 each contribute to the substrate site. Lys-204 bears the N6-(pyridoxal phosphate)lysine mark. Residue Glu-334 coordinates substrate. Position 362 is a phosphoserine (Ser-362).

This sequence belongs to the trans-sulfuration enzymes family. As to quaternary structure, homotetramer. Pyridoxal 5'-phosphate is required as a cofactor.

Its subcellular location is the cytoplasm. The catalysed reaction is L,L-cystathionine + H2O = 2-oxobutanoate + L-cysteine + NH4(+). It functions in the pathway amino-acid biosynthesis; L-cysteine biosynthesis; L-cysteine from L-homocysteine and L-serine: step 2/2. Functionally, catalyzes the production of cysteine from cystathionine in the reverse transsulfuration pathway for the biosynthesis of sulfur-containing amino acids cysteine and methionine. In this pathway, homocysteine sulfur is converted to cysteine sulfur. Also has cystathionine beta-lyase and cystathionine gamma-synthase activities in vitro. Cystathionine beta-lyase may be physiological, while cystathionine gamma-synthase activity is not, as the required substrate O-succinyl-L-homoserine(OSH) does not occur naturally in S.cerevisiae. The sequence is that of Cystathionine gamma-lyase from Saccharomyces cerevisiae (strain ATCC 204508 / S288c) (Baker's yeast).